The primary structure comprises 359 residues: Caffeic acid 3-O-methyltransferase (359 aa).

126-132 provides a ligand contact to substrate; sequence MNQDKVL. Positions 158–176 are substrate binding; sequence AFEYHGTDPRFNKVFNRGM. 5 residues coordinate S-adenosyl-L-methionine: Gly-204, Asp-227, Asp-247, Met-248, and Lys-261. His-265 serves as the catalytic Proton acceptor.

The protein belongs to the class I-like SAM-binding methyltransferase superfamily. Cation-independent O-methyltransferase family. COMT subfamily. In terms of assembly, homodimer. As to expression, fruit. Not expressed in leaf.

It carries out the reaction (E)-caffeate + S-adenosyl-L-methionine = (E)-ferulate + S-adenosyl-L-homocysteine + H(+). The protein operates within aromatic compound metabolism; phenylpropanoid biosynthesis. Functionally, catalyzes the conversion of caffeic acid to ferulic acid and of 5-hydroxyferulic acid to sinapic acid. The resulting products may subsequently be converted to the corresponding alcohols that are incorporated into lignins. This is Caffeic acid 3-O-methyltransferase (COMT) from Capsicum annuum (Capsicum pepper).